A 101-amino-acid polypeptide reads, in one-letter code: uncharacterized protein (101 aa).

Low complexity predominate over residues 65–79 (QEAAAPAGPQEPAEA). The segment at 65–101 (QEAAAPAGPQEPAEASGDAGKKEEVEEEEIEIDFGMF) is disordered. Over residues 89–101 (VEEEEIEIDFGMF) the composition is skewed to acidic residues.

This is an uncharacterized protein from Encephalitozoon cuniculi (strain GB-M1) (Microsporidian parasite).